Reading from the N-terminus, the 190-residue chain is Shikimate kinase (190 aa).

26-31 (GSGKST) provides a ligand contact to ATP. Ser30 is a binding site for Mg(2+). Positions 48, 72, and 94 each coordinate substrate. An ATP-binding site is contributed by Arg133. A substrate-binding site is contributed by Arg152.

This sequence belongs to the shikimate kinase family. In terms of assembly, monomer. Mg(2+) is required as a cofactor.

Its subcellular location is the cytoplasm. The catalysed reaction is shikimate + ATP = 3-phosphoshikimate + ADP + H(+). The protein operates within metabolic intermediate biosynthesis; chorismate biosynthesis; chorismate from D-erythrose 4-phosphate and phosphoenolpyruvate: step 5/7. In terms of biological role, catalyzes the specific phosphorylation of the 3-hydroxyl group of shikimic acid using ATP as a cosubstrate. The protein is Shikimate kinase of Prochlorococcus marinus (strain SARG / CCMP1375 / SS120).